We begin with the raw amino-acid sequence, 150 residues long: Cell division protein SepF (150 aa).

The protein belongs to the SepF family. In terms of assembly, homodimer. Interacts with FtsZ.

It localises to the cytoplasm. Functionally, cell division protein that is part of the divisome complex and is recruited early to the Z-ring. Probably stimulates Z-ring formation, perhaps through the cross-linking of FtsZ protofilaments. Its function overlaps with FtsA. In Clostridium beijerinckii (strain ATCC 51743 / NCIMB 8052) (Clostridium acetobutylicum), this protein is Cell division protein SepF.